The chain runs to 915 residues: Protein SLFN14 (915 aa).

A compositionally biased stretch (basic residues) spans 157 to 167 (AAQRGRRRLHP). The segment at 157–176 (AAQRGRRRLHPPRASNSNLQ) is disordered. The segment at 204 to 389 (ESTHVEFKRF…KVLEFKGALQ (186 aa)) is required for endoribonuclease activity. Residues 390–569 (RHLFPVTQKT…QLGCEFFNLL (180 aa)) are required for ribosome binding.

In terms of assembly, associates with ribosomes in an ATP-independent manner. Requires Mg(2+) as cofactor. Mn(2+) serves as cofactor. As to expression, detected in reticulocytes (at protein level).

It is found in the nucleus. Shows no ribosome-associated and endoribonuclease activities. In terms of biological role, displays polysome-associated endoribonuclease activity towards mRNAs and rRNAs. May play a role in RNA surveillance pathways by recognizing stalled ribosomes and triggering endonucleolytic cleavage of aberrant mRNAs. Cleaves RNAs in a magnesium-, manganese-dependent and ATP-independent manner. Involved in correct maturation of megakaryocytes and especially important for proplatelet extension. This is Protein SLFN14 from Oryctolagus cuniculus (Rabbit).